Here is a 475-residue protein sequence, read N- to C-terminus: MSPQTETKASVGFKAGVKDYKLNYYTPDYVTKDTDILAAFRVTPQPGVPPEEAGAAVAAESSTGTWTTVWTDGLTSLDRYKGRCYHIEPVAGEDNQYICYVAYPLDLFEEGSVTNMFTSIVGNVFGFKALRALRLEDLRIPTSYVKTFQGPPHGIQVERDKLNKYGRPLLGCTIKPKLGLSAKNYGRAVYECLRGGLDFTKDDENVNSQPFMRWRDRFLFCAEALFKAQAETGEIKGHYLNATAGTCEEMMKRAVFARELGVPIVMHDYLTGGFTANTTLAHYCRDNGLLLHIHRAMHAVIDRQKNHGIHFRVLAKALRMSGGDHIHAGTVVGKLEGEREITLGFVDLLRDDFIEKDRSRGIYFTQDWVSLPGVLPVASGGIHVWHMPALTEIFGDDSVLQFGGGTLGHPWGNAPGAVANRVALEACVQARNEGRDLAREGNEIIRAACKWSPELAAACEVWKEIKFEFEAMDTL.

Positions 1–2 (MS) are excised as a propeptide. Pro-3 carries the N-acetylproline modification. N6,N6,N6-trimethyllysine is present on Lys-14. Asn-123 and Thr-173 together coordinate substrate. Catalysis depends on Lys-175, which acts as the Proton acceptor. Lys-177 provides a ligand contact to substrate. Positions 201, 203, and 204 each coordinate Mg(2+). Residue Lys-201 is modified to N6-carboxylysine. The active-site Proton acceptor is the His-294. Positions 295, 327, and 379 each coordinate substrate.

The protein belongs to the RuBisCO large chain family. Type I subfamily. As to quaternary structure, heterohexadecamer of 8 large chains and 8 small chains; disulfide-linked. The disulfide link is formed within the large subunit homodimers. Requires Mg(2+) as cofactor. In terms of processing, the disulfide bond which can form in the large chain dimeric partners within the hexadecamer appears to be associated with oxidative stress and protein turnover.

The protein resides in the plastid. Its subcellular location is the chloroplast. The enzyme catalyses 2 (2R)-3-phosphoglycerate + 2 H(+) = D-ribulose 1,5-bisphosphate + CO2 + H2O. It carries out the reaction D-ribulose 1,5-bisphosphate + O2 = 2-phosphoglycolate + (2R)-3-phosphoglycerate + 2 H(+). In terms of biological role, ruBisCO catalyzes two reactions: the carboxylation of D-ribulose 1,5-bisphosphate, the primary event in carbon dioxide fixation, as well as the oxidative fragmentation of the pentose substrate in the photorespiration process. Both reactions occur simultaneously and in competition at the same active site. The polypeptide is Ribulose bisphosphate carboxylase large chain (Nandina domestica (Heavenly bamboo)).